Reading from the N-terminus, the 171-residue chain is UPF0303 protein YPK_1581 (171 aa).

This sequence belongs to the UPF0303 family.

The chain is UPF0303 protein YPK_1581 from Yersinia pseudotuberculosis serotype O:3 (strain YPIII).